The sequence spans 483 residues: Sphingomyelin phosphodiesterase 5 (483 aa).

A disordered region spans residues 1 to 20 (MSLPDISRRRSPVPQEDWPL). Residues 80–100 (VLLPLVVVGLPLALVGLALWL) form a helical membrane-spanning segment. Residue E209 coordinates Mg(2+). H471 serves as the catalytic Proton acceptor.

The protein belongs to the neutral sphingomyelinase family. Mg(2+) is required as a cofactor. It depends on Mn(2+) as a cofactor. Highly expressed in testis, pancreas, epididymis, and brain.

Its subcellular location is the mitochondrion inner membrane. The protein localises to the endoplasmic reticulum membrane. The catalysed reaction is a sphingomyelin + H2O = phosphocholine + an N-acylsphing-4-enine + H(+). It catalyses the reaction N-(hexadecanoyl)-sphing-4-enine-1-phosphocholine + H2O = N-hexadecanoylsphing-4-enine + phosphocholine + H(+). It functions in the pathway lipid metabolism; sphingolipid metabolism. Its activity is regulated as follows. Activated by anionic phospholipids, specially cardiolipin and phosphatidylserine. Functionally, catalyzes the hydrolysis of membrane sphingomyelin to form phosphorylcholine and ceramide. The protein is Sphingomyelin phosphodiesterase 5 of Mus musculus (Mouse).